A 291-amino-acid chain; its full sequence is 4-diphosphocytidyl-2-C-methyl-D-erythritol kinase (291 aa).

The active site involves K10. Residue 94 to 104 (PVSAGLAGGSS) participates in ATP binding. Residue D136 is part of the active site.

This sequence belongs to the GHMP kinase family. IspE subfamily.

The enzyme catalyses 4-CDP-2-C-methyl-D-erythritol + ATP = 4-CDP-2-C-methyl-D-erythritol 2-phosphate + ADP + H(+). It participates in isoprenoid biosynthesis; isopentenyl diphosphate biosynthesis via DXP pathway; isopentenyl diphosphate from 1-deoxy-D-xylulose 5-phosphate: step 3/6. Catalyzes the phosphorylation of the position 2 hydroxy group of 4-diphosphocytidyl-2C-methyl-D-erythritol. This is 4-diphosphocytidyl-2-C-methyl-D-erythritol kinase from Listeria monocytogenes serotype 4a (strain HCC23).